The sequence spans 255 residues: Folate receptor alpha (255 aa).

A signal peptide spans 1–24 (MAHLMTVQLLLLVMWMAECAQSRA). 8 cysteine pairs are disulfide-bonded: C35/C63, C55/C103, C64/C107, C87/C173, C94/C144, C133/C207, C137/C187, and C150/C167. Residue N67 is glycosylated (N-linked (GlcNAc...) asparagine). Folate contacts are provided by residues D101, Y105, 122–126 (WRKER), 155–160 (HKGWNW), and S194. N159 is a glycosylation site (N-linked (GlcNAc...) asparagine). N199 carries N-linked (GlcNAc...) asparagine glycosylation. S232 carries the GPI-anchor amidated serine lipid modification. Residues 233–255 (GAGFHGTWPLLCSLSLVLLWVIS) constitute a propeptide, removed in mature form.

The protein belongs to the folate receptor family. The secreted form is derived from the membrane-bound form either by cleavage of the GPI anchor, or/and by proteolysis catalyzed by a metalloprotease. As to expression, detected in kidney proximal tubules (at protein level).

The protein localises to the cell membrane. The protein resides in the apical cell membrane. Its subcellular location is the basolateral cell membrane. It is found in the secreted. It localises to the cytoplasmic vesicle. The protein localises to the clathrin-coated vesicle. The protein resides in the endosome. Functionally, binds to folate and reduced folic acid derivatives and mediates delivery of 5-methyltetrahydrofolate and folate analogs into the interior of cells. Has high affinity for folate and folic acid analogs at neutral pH. Exposure to slightly acidic pH after receptor endocytosis triggers a conformation change that strongly reduces its affinity for folates and mediates their release. Required for normal embryonic development and normal cell proliferation. Required for renal folate reabsorption. This Mus musculus (Mouse) protein is Folate receptor alpha (Folr1).